The primary structure comprises 485 residues: Glutamyl-tRNA(Gln) amidotransferase subunit A (485 aa).

Active-site charge relay system residues include K78 and S153. S177 (acyl-ester intermediate) is an active-site residue.

Belongs to the amidase family. GatA subfamily. Heterotrimer of A, B and C subunits.

The catalysed reaction is L-glutamyl-tRNA(Gln) + L-glutamine + ATP + H2O = L-glutaminyl-tRNA(Gln) + L-glutamate + ADP + phosphate + H(+). Its function is as follows. Allows the formation of correctly charged Gln-tRNA(Gln) through the transamidation of misacylated Glu-tRNA(Gln) in organisms which lack glutaminyl-tRNA synthetase. The reaction takes place in the presence of glutamine and ATP through an activated gamma-phospho-Glu-tRNA(Gln). This is Glutamyl-tRNA(Gln) amidotransferase subunit A from Desulfatibacillum aliphaticivorans.